A 587-amino-acid polypeptide reads, in one-letter code: Adenine deaminase (587 aa).

Belongs to the metallo-dependent hydrolases superfamily. Adenine deaminase family. It depends on Mn(2+) as a cofactor.

It catalyses the reaction adenine + H2O + H(+) = hypoxanthine + NH4(+). The polypeptide is Adenine deaminase (Shewanella halifaxensis (strain HAW-EB4)).